The following is a 294-amino-acid chain: NAD kinase (294 aa).

Catalysis depends on Asp74, which acts as the Proton acceptor. NAD(+)-binding positions include 74-75, 148-149, His159, Arg176, Asp178, 189-194, and Gln249; these read DG, NE, and TAYSLS.

It belongs to the NAD kinase family. A divalent metal cation serves as cofactor.

It is found in the cytoplasm. It catalyses the reaction NAD(+) + ATP = ADP + NADP(+) + H(+). Its function is as follows. Involved in the regulation of the intracellular balance of NAD and NADP, and is a key enzyme in the biosynthesis of NADP. Catalyzes specifically the phosphorylation on 2'-hydroxyl of the adenosine moiety of NAD to yield NADP. The polypeptide is NAD kinase (Vibrio vulnificus (strain YJ016)).